The chain runs to 629 residues: 1-deoxy-D-xylulose-5-phosphate synthase (629 aa).

Thiamine diphosphate contacts are provided by residues H78 and 119 to 121; that span reads AHS. Position 150 (D150) interacts with Mg(2+). Residues 151–152, N179, Y286, and E368 contribute to the thiamine diphosphate site; that span reads GA. N179 lines the Mg(2+) pocket.

It belongs to the transketolase family. DXPS subfamily. As to quaternary structure, homodimer. Mg(2+) is required as a cofactor. The cofactor is thiamine diphosphate.

It catalyses the reaction D-glyceraldehyde 3-phosphate + pyruvate + H(+) = 1-deoxy-D-xylulose 5-phosphate + CO2. It participates in metabolic intermediate biosynthesis; 1-deoxy-D-xylulose 5-phosphate biosynthesis; 1-deoxy-D-xylulose 5-phosphate from D-glyceraldehyde 3-phosphate and pyruvate: step 1/1. In terms of biological role, catalyzes the acyloin condensation reaction between C atoms 2 and 3 of pyruvate and glyceraldehyde 3-phosphate to yield 1-deoxy-D-xylulose-5-phosphate (DXP). In Acidovorax ebreus (strain TPSY) (Diaphorobacter sp. (strain TPSY)), this protein is 1-deoxy-D-xylulose-5-phosphate synthase.